The sequence spans 317 residues: Ribonuclease H2 subunit A (317 aa).

The RNase H type-2 domain maps to 43–270; sequence PCCLGVDEAG…AKDMLETKGG (228 aa). Positions 49, 50, and 166 each coordinate a divalent metal cation.

The protein belongs to the RNase HII family. Eukaryotic subfamily. The cofactor is Mn(2+). Mg(2+) is required as a cofactor.

The catalysed reaction is Endonucleolytic cleavage to 5'-phosphomonoester.. Endonuclease that specifically degrades the RNA of RNA-DNA hybrids. Participates in DNA replication. This is Ribonuclease H2 subunit A (rnh-201) from Neurospora crassa (strain ATCC 24698 / 74-OR23-1A / CBS 708.71 / DSM 1257 / FGSC 987).